The sequence spans 414 residues: Alanine--glyoxylate aminotransferase (414 aa).

A mitochondrion-targeting transit peptide spans 1 to 23; the sequence is MFQALAKASAALGPRAAGWVRTM. N6-(pyridoxal phosphate)lysine is present on Lys-231. N6-acetyllysine occurs at positions 256 and 334. Arg-382 contributes to the substrate binding site.

This sequence belongs to the class-V pyridoxal-phosphate-dependent aminotransferase family. In terms of assembly, homodimer. Pyridoxal 5'-phosphate serves as cofactor.

It is found in the peroxisome. The protein localises to the mitochondrion matrix. It carries out the reaction L-serine + pyruvate = 3-hydroxypyruvate + L-alanine. The enzyme catalyses glyoxylate + L-alanine = glycine + pyruvate. In terms of biological role, catalyzes the transamination of glyoxylate to glycine and contributes to the glyoxylate detoxification. Catalyzes the transamination between L-serine and pyruvate and weakly contributes to gluconeogenesis from the L-serine metabolism. The protein is Alanine--glyoxylate aminotransferase of Callithrix jacchus (White-tufted-ear marmoset).